An 89-amino-acid polypeptide reads, in one-letter code: uncharacterized protein (89 aa).

2 stretches are compositionally biased toward basic residues: residues 1–17 (MPPH…HGHH) and 65–89 (HHGH…HGHH). Disordered regions lie at residues 1 to 25 (MPPH…ITPV) and 60 to 89 (LETG…HGHH).

This is an uncharacterized protein from Dictyostelium discoideum (Social amoeba).